Here is a 399-residue protein sequence, read N- to C-terminus: Multi-drug resistance efflux pump PmrA (399 aa).

10 consecutive transmembrane segments (helical) span residues 12–34 (IAWFGNFLTGASISLVVPFMPIF), 49–71 (AGLAISVSAISAALFSPIWGILA), 84–106 (GLAMTITMGGLAFVPNIYWLIFL), 140–162 (LSTGVVAGTLTGPFIGGFIAELF), 167–186 (VFLLVGSFLFLAAILTICFI), 217–239 (LFLTSFVIQFSAQSIGPILALYV), 248–270 (LLFVSGLIVSSMGFSSMMSAGVM), 306–328 (LGLYRFLFGLGTGALIPGVNALL), 340–362 (VFAFNQVFFYLGGVVGPMAGSAV), and 366–388 (FGYHAVFYATSLCVAFSCLFNLI).

This sequence belongs to the major facilitator superfamily. TCR/Tet family.

The protein resides in the cell membrane. Its function is as follows. Efflux pump for various substrates. This Streptococcus pneumoniae serotype 4 (strain ATCC BAA-334 / TIGR4) protein is Multi-drug resistance efflux pump PmrA (pmrA).